Reading from the N-terminus, the 221-residue chain is Putative N-acetylmannosamine-6-phosphate 2-epimerase (221 aa).

It belongs to the NanE family.

The catalysed reaction is an N-acyl-D-glucosamine 6-phosphate = an N-acyl-D-mannosamine 6-phosphate. It participates in amino-sugar metabolism; N-acetylneuraminate degradation; D-fructose 6-phosphate from N-acetylneuraminate: step 3/5. Functionally, converts N-acetylmannosamine-6-phosphate (ManNAc-6-P) to N-acetylglucosamine-6-phosphate (GlcNAc-6-P). The chain is Putative N-acetylmannosamine-6-phosphate 2-epimerase from Clostridium perfringens (strain SM101 / Type A).